The sequence spans 531 residues: Fe-S cluster assembly factor HCF101, chloroplastic (531 aa).

The N-terminal 62 residues, 1–62 (MRNLRAAAPA…PRRVGRLRRR (62 aa)), are a transit peptide targeting the chloroplast. Pro residues predominate over residues 17–27 (APPLLLPPSTP). A disordered region spans residues 17–37 (APPLLLPPSTPTPRGAFSAKA). Residues 28-37 (TPRGAFSAKA) are compositionally biased toward low complexity. 181–188 (CKGGVGKS) is a binding site for ATP.

It belongs to the Mrp/NBP35 ATP-binding proteins family. [4Fe-4S] cluster is required as a cofactor.

Its subcellular location is the plastid. It localises to the chloroplast stroma. Its function is as follows. Required for photosystem I (PSI) biosynthesis and assembly. May serve as a chloroplast scaffold protein that specifically assembles iron-sulfur (4Fe-4S) clusters and transfers them to the chloroplast PSI and ferredoxin-thioredoxin (FTR) complexes. Probably not required for assembly or stability of plastidic 2Fe-2S clusters. The chain is Fe-S cluster assembly factor HCF101, chloroplastic (HCF101) from Oryza sativa subsp. japonica (Rice).